Here is a 206-residue protein sequence, read N- to C-terminus: UPF0328 protein ECU01_0050/ECU01_1560 (206 aa).

Disordered regions lie at residues 1-153 (MPRP…HSHT) and 179-206 (GRLH…LATL). Basic and acidic residues predominate over residues 74–96 (HTEGCHTHEANPEPNTKHTETES). Composition is skewed to polar residues over residues 97 to 120 (PKPQ…SQNT) and 132 to 148 (SRPS…QSPH).

This sequence belongs to the UPF0328 family.

The chain is UPF0328 protein ECU01_0050/ECU01_1560 from Encephalitozoon cuniculi (strain GB-M1) (Microsporidian parasite).